We begin with the raw amino-acid sequence, 129 residues long: Large ribosomal subunit protein uL22 (129 aa).

It belongs to the universal ribosomal protein uL22 family. Part of the 50S ribosomal subunit.

Its function is as follows. This protein binds specifically to 23S rRNA; its binding is stimulated by other ribosomal proteins, e.g. L4, L17, and L20. It is important during the early stages of 50S assembly. It makes multiple contacts with different domains of the 23S rRNA in the assembled 50S subunit and ribosome. Functionally, the globular domain of the protein is located near the polypeptide exit tunnel on the outside of the subunit, while an extended beta-hairpin is found that lines the wall of the exit tunnel in the center of the 70S ribosome. This Agrobacterium fabrum (strain C58 / ATCC 33970) (Agrobacterium tumefaciens (strain C58)) protein is Large ribosomal subunit protein uL22.